The following is a 195-amino-acid chain: Imidazoleglycerol-phosphate dehydratase (195 aa).

The protein belongs to the imidazoleglycerol-phosphate dehydratase family.

Its subcellular location is the cytoplasm. The enzyme catalyses D-erythro-1-(imidazol-4-yl)glycerol 3-phosphate = 3-(imidazol-4-yl)-2-oxopropyl phosphate + H2O. The protein operates within amino-acid biosynthesis; L-histidine biosynthesis; L-histidine from 5-phospho-alpha-D-ribose 1-diphosphate: step 6/9. The protein is Imidazoleglycerol-phosphate dehydratase of Heliobacterium modesticaldum (strain ATCC 51547 / Ice1).